Here is a 393-residue protein sequence, read N- to C-terminus: Dual specificity mitogen-activated protein kinase kinase 1 (393 aa).

The interval 1-27 (MPKKKPTPIQLNPAPDGSAVNGTSSAE) is disordered. Residues 68–361 (FEKISELGAG…LKQLMVHAFI (294 aa)) enclose the Protein kinase domain. ATP is bound by residues 74–82 (LGAGNGGVV) and K97. The active-site Proton acceptor is D190. 2 positions are modified to phosphoserine; by RAF: S218 and S222. Residues 270 to 307 (ELELMFGCQVEGDAAETPPRPRTPGRPLSSYGMDSRPP) are RAF1-binding. At T286 the chain carries Phosphothreonine. T292 is subject to Phosphothreonine; by MAPK1. Residue S298 is modified to Phosphoserine; by PAK.

This sequence belongs to the protein kinase superfamily. STE Ser/Thr protein kinase family. MAP kinase kinase subfamily. In terms of assembly, found in a complex with at least BRAF, HRAS, MAP2K1, MAPK3/ERK1 and RGS14. Forms a heterodimer with MAP2K2/MEK2. Forms heterodimers with KSR2 which further dimerize to form tetramers. Interacts with KSR1 or KSR2 and BRAF; the interaction with KSR1 or KSR2 mediates KSR1-BRAF or KSR2-BRAF dimerization. Interacts with ARBB2, LAMTOR3, MAPK1/ERK2 and RAF1. Interacts with MAPK1/ERK2. Interacts with MORG1. Interacts with PPARG. Interacts with isoform 1 of VRK2. Interacts with SGK1. Interacts with BIRC6/bruce. Interacts with KAT7; the interaction promotes KAT7 phosphorylation. Interacts with RAF1 and NEK10; the interaction is required for ERK1/2-signaling pathway activation in response to UV irradiation. Interacts with TRAF3IP3. Interacts with MOS. In terms of processing, phosphorylation at Ser-218 and Ser-222 by MAP kinase kinase kinases (BRAF or MEKK1) positively regulates the kinase activity. Also phosphorylated at Thr-292 by MAPK1/ERK2 and at Ser-298 by PAK. MAPK1/ERK2 phosphorylation of Thr-292 occurs in response to cellular adhesion and leads to inhibition of Ser-298 phosphorylation by PAK. Autophosphorylated at Ser-218 and Ser-222, autophosphosphorylation is promoted by NEK10 following UV irradiation.

Its subcellular location is the cytoplasm. It localises to the cytoskeleton. The protein resides in the microtubule organizing center. The protein localises to the centrosome. It is found in the spindle pole body. Its subcellular location is the nucleus. It localises to the membrane. It catalyses the reaction L-seryl-[protein] + ATP = O-phospho-L-seryl-[protein] + ADP + H(+). The enzyme catalyses L-threonyl-[protein] + ATP = O-phospho-L-threonyl-[protein] + ADP + H(+). It carries out the reaction L-tyrosyl-[protein] + ATP = O-phospho-L-tyrosyl-[protein] + ADP + H(+). Its activity is regulated as follows. Ras proteins such as HRAS mediate the activation of RAF proteins such as RAF1 or BRAF which in turn activate extracellular signal-regulated kinases (ERK) through MAPK (mitogen-activated protein kinases) and ERK kinases MAP2K1/MEK1 and MAP2K2/MEK2. Activation occurs through phosphorylation of Ser-218 and Ser-222. MAP2K1/MEK1 binds KSR1 or KSR2 releasing the inhibitory intramolecular interaction between KSR1 or KSR2 protein kinase and N-terminal domains. This allows KSR1 or KSR2 dimerization with BRAF leading to BRAF activation and phosphorylation of MAP2K1. MAP2K1/MEK1 is also the target of negative feed-back regulation by its substrate kinases, such as MAPK1/ERK2. These phosphorylate MAP2K1/MEK1 on Thr-292, thereby facilitating dephosphorylation of the activating residues Ser-218 and Ser-222. Inhibited by serine/threonine phosphatase 2A. Its function is as follows. Dual specificity protein kinase which acts as an essential component of the MAP kinase signal transduction pathway. Binding of extracellular ligands such as growth factors, cytokines and hormones to their cell-surface receptors activates RAS and this initiates RAF1 activation. RAF1 then further activates the dual-specificity protein kinases MAP2K1/MEK1 and MAP2K2/MEK2. Both MAP2K1/MEK1 and MAP2K2/MEK2 function specifically in the MAPK/ERK cascade, and catalyze the concomitant phosphorylation of a threonine and a tyrosine residue in a Thr-Glu-Tyr sequence located in the extracellular signal-regulated kinases MAPK3/ERK1 and MAPK1/ERK2, leading to their activation and further transduction of the signal within the MAPK/ERK cascade. Activates BRAF in a KSR1 or KSR2-dependent manner; by binding to KSR1 or KSR2 releases the inhibitory intramolecular interaction between KSR1 or KSR2 protein kinase and N-terminal domains which promotes KSR1 or KSR2-BRAF dimerization and BRAF activation. Depending on the cellular context, this pathway mediates diverse biological functions such as cell growth, adhesion, survival and differentiation, predominantly through the regulation of transcription, metabolism and cytoskeletal rearrangements. One target of the MAPK/ERK cascade is peroxisome proliferator-activated receptor gamma (PPARG), a nuclear receptor that promotes differentiation and apoptosis. MAP2K1/MEK1 has been shown to export PPARG from the nucleus. The MAPK/ERK cascade is also involved in the regulation of endosomal dynamics, including lysosome processing and endosome cycling through the perinuclear recycling compartment (PNRC), as well as in the fragmentation of the Golgi apparatus during mitosis. The sequence is that of Dual specificity mitogen-activated protein kinase kinase 1 (MAP2K1) from Pan troglodytes (Chimpanzee).